Consider the following 659-residue polypeptide: DNA ligase (659 aa).

NAD(+) contacts are provided by residues 32–36, 81–82, and Glu110; these read DAEYD and SL. Lys112 (N6-AMP-lysine intermediate) is an active-site residue. Arg133, Glu168, Lys284, and Lys308 together coordinate NAD(+). Cys402, Cys405, Cys420, and Cys425 together coordinate Zn(2+). A BRCT domain is found at 582–659; that stretch reads AKPQIFAGKS…SEEEFAELLP (78 aa).

This sequence belongs to the NAD-dependent DNA ligase family. LigA subfamily. Mg(2+) is required as a cofactor. It depends on Mn(2+) as a cofactor.

The enzyme catalyses NAD(+) + (deoxyribonucleotide)n-3'-hydroxyl + 5'-phospho-(deoxyribonucleotide)m = (deoxyribonucleotide)n+m + AMP + beta-nicotinamide D-nucleotide.. Functionally, DNA ligase that catalyzes the formation of phosphodiester linkages between 5'-phosphoryl and 3'-hydroxyl groups in double-stranded DNA using NAD as a coenzyme and as the energy source for the reaction. It is essential for DNA replication and repair of damaged DNA. This Desulfitobacterium hafniense (strain Y51) protein is DNA ligase.